The sequence spans 473 residues: Peptidoglycan DL-endopeptidase CwlO (473 aa).

The N-terminal stretch at Met-1–Ala-30 is a signal peptide. Disordered stretches follow at residues Glu-31–Glu-52, Ala-79–Glu-98, and Glu-237–Ile-337. Positions Leu-33–Gln-44 are enriched in basic and acidic residues. The span at Leu-241–Ala-250 shows a compositional bias: polar residues. 2 stretches are compositionally biased toward basic and acidic residues: residues Glu-251–Glu-260 and Lys-267–Asp-277. Low complexity predominate over residues Ser-291–Ile-337. Residues Ser-340–Val-471 enclose the NlpC/P60 domain. Cys-377 acts as the Nucleophile in catalysis. The active-site Proton acceptor is His-431. Asn-443 is a catalytic residue.

The protein belongs to the peptidase C40 family. Identified in the extracellular proteome as a number of processing products of about 50 and 30 kDa.

The protein resides in the secreted. Its subcellular location is the cell wall. With respect to regulation, detected in exponentially growing cells, the 50 and 30 kDa processing products disappear upon entry into stationary phase with the concomitant appearance of a 20 kDa products. The 50 kDa form persists in the absence of extracellular proteases. The C-terminal part of CwlO shows a cell wall hydrolytic DL-endopeptidase activity. In Bacillus subtilis (strain 168), this protein is Peptidoglycan DL-endopeptidase CwlO (cwlO).